We begin with the raw amino-acid sequence, 402 residues long: Acetate kinase (402 aa).

Mg(2+) is bound at residue Asn-7. Residue Lys-14 participates in ATP binding. Arg-95 is a binding site for substrate. Residue Asp-152 is the Proton donor/acceptor of the active site. Residues 212–216, 286–288, and 334–338 each bind ATP; these read HLGNG, DMR, and GIGEN. Mg(2+) is bound at residue Glu-388.

Belongs to the acetokinase family. As to quaternary structure, homodimer. Mg(2+) serves as cofactor. It depends on Mn(2+) as a cofactor.

The protein resides in the cytoplasm. It carries out the reaction acetate + ATP = acetyl phosphate + ADP. It functions in the pathway metabolic intermediate biosynthesis; acetyl-CoA biosynthesis; acetyl-CoA from acetate: step 1/2. Its function is as follows. Catalyzes the formation of acetyl phosphate from acetate and ATP. Can also catalyze the reverse reaction. This is Acetate kinase from Nitratidesulfovibrio vulgaris (strain DP4) (Desulfovibrio vulgaris).